A 542-amino-acid polypeptide reads, in one-letter code: Chaperonin GroEL (542 aa).

ATP contacts are provided by residues 29-32, Lys-50, 86-90, Gly-415, and Asp-495; these read TLGP and DGTTT.

The protein belongs to the chaperonin (HSP60) family. Forms a cylinder of 14 subunits composed of two heptameric rings stacked back-to-back. Interacts with the co-chaperonin GroES.

It localises to the cytoplasm. The catalysed reaction is ATP + H2O + a folded polypeptide = ADP + phosphate + an unfolded polypeptide.. Its function is as follows. Together with its co-chaperonin GroES, plays an essential role in assisting protein folding. The GroEL-GroES system forms a nano-cage that allows encapsulation of the non-native substrate proteins and provides a physical environment optimized to promote and accelerate protein folding. In Flavobacterium psychrophilum (strain ATCC 49511 / DSM 21280 / CIP 103535 / JIP02/86), this protein is Chaperonin GroEL.